The following is a 53-amino-acid chain: Dihydrolipoyl dehydrogenase (53 aa).

FAD contacts are provided by residues 35 to 44 (EKYPTFGGTC) and Lys-53. A disulfide bond links Cys-44 and Cys-49.

Belongs to the class-I pyridine nucleotide-disulfide oxidoreductase family. In terms of assembly, homodimer. It depends on FAD as a cofactor.

The protein resides in the mitochondrion. It carries out the reaction N(6)-[(R)-dihydrolipoyl]-L-lysyl-[protein] + NAD(+) = N(6)-[(R)-lipoyl]-L-lysyl-[protein] + NADH + H(+). Its activity is regulated as follows. Lipoamide reduction and the NADH -&gt; NAD reaction are both completely inhibited by copper and cadmium ions. In terms of biological role, lipoamide dehydrogenase is a component of the glycine cleavage system as well as of the alpha-ketoacid dehydrogenase complexes. This enzyme has lipoamide dehydrogenase activity and NADH -&gt; NAD transhydrogenation activity. Also displays some NADH-ferricyanide reductase and NADPH -&gt; NAD transydrogenation activities. The polypeptide is Dihydrolipoyl dehydrogenase (Hymenolepis diminuta (Rat tapeworm)).